The primary structure comprises 572 residues: NADP-dependent malic enzyme (572 aa).

M1 bears the N-acetylmethionine mark. Y102 (proton donor) is an active-site residue. R155 provides a ligand contact to NADP(+). K173 serves as the catalytic Proton acceptor. A divalent metal cation contacts are provided by E245, D246, and D269. Residues D269 and 301–318 each bind NADP(+); that span reads GAGE…MALE. S336 bears the Phosphoserine mark. N408 serves as a coordination point for NADP(+).

The protein belongs to the malic enzymes family. As to quaternary structure, homotetramer. Mg(2+) serves as cofactor. Requires Mn(2+) as cofactor. Expressed in all tissues tested including liver, placenta and white adipose tissue.

The protein resides in the cytoplasm. The catalysed reaction is (S)-malate + NADP(+) = pyruvate + CO2 + NADPH. It carries out the reaction oxaloacetate + H(+) = pyruvate + CO2. In terms of biological role, catalyzes the oxidative decarboxylation of (S)-malate in the presence of NADP(+) and divalent metal ions, and decarboxylation of oxaloacetate. This chain is NADP-dependent malic enzyme, found in Homo sapiens (Human).